The following is a 598-amino-acid chain: Aspartate--tRNA(Asp/Asn) ligase (598 aa).

Residue E174 coordinates L-aspartate. The tract at residues 198–201 (QQLK) is aspartate. An L-aspartate-binding site is contributed by R220. ATP-binding positions include 220 to 222 (RDE) and Q229. H458 serves as a coordination point for L-aspartate. Position 492 (E492) interacts with ATP. Position 499 (R499) interacts with L-aspartate. Residue 544-547 (GIDR) participates in ATP binding.

Belongs to the class-II aminoacyl-tRNA synthetase family. Type 1 subfamily. In terms of assembly, homodimer.

The protein resides in the cytoplasm. The catalysed reaction is tRNA(Asx) + L-aspartate + ATP = L-aspartyl-tRNA(Asx) + AMP + diphosphate. In terms of biological role, aspartyl-tRNA synthetase with relaxed tRNA specificity since it is able to aspartylate not only its cognate tRNA(Asp) but also tRNA(Asn). Reaction proceeds in two steps: L-aspartate is first activated by ATP to form Asp-AMP and then transferred to the acceptor end of tRNA(Asp/Asn). This Dehalococcoides mccartyi (strain CBDB1) protein is Aspartate--tRNA(Asp/Asn) ligase.